Consider the following 735-residue polypeptide: Phosphoribosylformylglycinamidine synthase subunit PurL (735 aa).

The active site involves H50. Residues Y53 and K92 each coordinate ATP. Mg(2+) is bound at residue E94. Substrate-binding positions include 95–98 and R117; that span reads SHNH. The active-site Proton acceptor is H96. D118 is a binding site for Mg(2+). Q241 serves as a coordination point for substrate. D269 is a Mg(2+) binding site. Substrate is bound at residue 313 to 315; sequence ESQ. Residues D495 and G532 each contribute to the ATP site. N533 is a Mg(2+) binding site. Substrate is bound at residue S535.

Belongs to the FGAMS family. In terms of assembly, monomer. Part of the FGAM synthase complex composed of 1 PurL, 1 PurQ and 2 PurS subunits.

It localises to the cytoplasm. It catalyses the reaction N(2)-formyl-N(1)-(5-phospho-beta-D-ribosyl)glycinamide + L-glutamine + ATP + H2O = 2-formamido-N(1)-(5-O-phospho-beta-D-ribosyl)acetamidine + L-glutamate + ADP + phosphate + H(+). The protein operates within purine metabolism; IMP biosynthesis via de novo pathway; 5-amino-1-(5-phospho-D-ribosyl)imidazole from N(2)-formyl-N(1)-(5-phospho-D-ribosyl)glycinamide: step 1/2. In terms of biological role, part of the phosphoribosylformylglycinamidine synthase complex involved in the purines biosynthetic pathway. Catalyzes the ATP-dependent conversion of formylglycinamide ribonucleotide (FGAR) and glutamine to yield formylglycinamidine ribonucleotide (FGAM) and glutamate. The FGAM synthase complex is composed of three subunits. PurQ produces an ammonia molecule by converting glutamine to glutamate. PurL transfers the ammonia molecule to FGAR to form FGAM in an ATP-dependent manner. PurS interacts with PurQ and PurL and is thought to assist in the transfer of the ammonia molecule from PurQ to PurL. The protein is Phosphoribosylformylglycinamidine synthase subunit PurL of Bartonella henselae (strain ATCC 49882 / DSM 28221 / CCUG 30454 / Houston 1) (Rochalimaea henselae).